The following is a 476-amino-acid chain: Transmembrane transporter FPSE_08127 (476 aa).

The helical transmembrane segment at 72–92 (ILAIPAALGALGSIGGSLCII) threads the bilayer. A glycan (N-linked (GlcNAc...) asparagine) is linked at Asn-111. Transmembrane regions (helical) follow at residues 133 to 153 (LVGV…VVAI), 164 to 184 (GTCT…FSAI), 192 to 212 (WLTW…VVAV), 231 to 251 (WAPI…NIFI), 275 to 295 (ACLV…LVIY), 317 to 337 (VAYG…QHVA), 364 to 384 (LGIN…VPIL), 387 to 407 (LLGL…PALL), and 431 to 451 (LIMM…VVLI).

The protein belongs to the amino acid/polyamine transporter 2 family.

It localises to the membrane. In terms of biological role, transmembrane transporter; part of the Fusarium detoxification of benzoxazolinone cluster involved in the degradation of benzoxazolinones produced by the host plant. Maize, wheat, and rye produce the 2 benzoxazinone phytoanticipins 2,4-dihy-droxy-7-methoxy-1,4-benzoxazin-3-one (DIMBOA) and 2,4-dihydroxy-1,4-benzoxazin-3-one (DIBOA) that, due to their inherent instability once released, spontaneously degrade to the more stable corresponding benzoxazolinones, 6-methoxy-2-benzoxazolinone (MBOA) and 2-benzoxazolinone (BOA), respectively. FPSE_08127 is proposed to shuttle metabolites of benzoxazolinone degradation. The sequence is that of Transmembrane transporter FPSE_08127 from Fusarium pseudograminearum (strain CS3096) (Wheat and barley crown-rot fungus).